Consider the following 70-residue polypeptide: Movement protein TGBp3 (70 aa).

Residues 1 to 6 lie on the Lumenal side of the membrane; it reads MEANTY. The helical transmembrane segment at 7-27 threads the bilayer; it reads LNAIILVLVVTIIAVISTSLV. The Cytoplasmic segment spans residues 28 to 70; that stretch reads RTEPCVIKITGESITVLACKLDAETIRAIADLKPLSVERLSFH.

It belongs to the Tymovirales TGBp3 protein family.

It is found in the host endoplasmic reticulum membrane. Plays a role in viral cell-to-cell propagation, by facilitating genome transport to neighboring plant cells through plasmosdesmata. May induce the formation of granular vesicles derived from the Endoplasmic reticulum, which align on actin filaments. The chain is Movement protein TGBp3 from Potato virus X (PVX).